A 595-amino-acid polypeptide reads, in one-letter code: Protein UL31 (595 aa).

The first 23 residues, 1–23 (MGDKPTLVTLLTVAVSSPPPSSP), serve as a signal peptide directing secretion. Positions 47-94 (TATSEVGEKTAEQEVAAADPETGNERRENRENEGGETRTTGTTAVKRS) are disordered. The span at 69-82 (GNERRENRENEGGE) shows a compositional bias: basic and acidic residues. N-linked (GlcNAc...) asparagine; by host glycosylation is found at N176 and N197.

Belongs to the herpesviridae U10 family. Interacts with host CGAS.

The protein resides in the host cytoplasm. It localises to the host nucleus. Functionally, plays a role in the inhibition of host innate immune system by targeting host CGAS and promoting dissociation of DNA from CGAS, thereby inhibiting the enzymatic activity of CGAS. The sequence is that of Protein UL31 from Homo sapiens (Human).